The primary structure comprises 392 residues: Chalcone synthase (392 aa).

C165 is a catalytic residue.

This sequence belongs to the thiolase-like superfamily. Chalcone/stilbene synthases family.

It catalyses the reaction (E)-4-coumaroyl-CoA + 3 malonyl-CoA + 3 H(+) = 2',4,4',6'-tetrahydroxychalcone + 3 CO2 + 4 CoA. It functions in the pathway secondary metabolite biosynthesis; flavonoid biosynthesis. Its function is as follows. The primary product of this enzyme is 4,2',4',6'-tetrahydroxychalcone (also termed naringenin-chalcone or chalcone) which can under specific conditions spontaneously isomerize into naringenin. This Persea americana (Avocado) protein is Chalcone synthase (CHS).